A 176-amino-acid chain; its full sequence is Shikimate kinase (176 aa).

14-19 (GAGKST) lines the ATP pocket. Serine 18 provides a ligand contact to Mg(2+). The substrate site is built by aspartate 36, arginine 60, and glycine 83. ATP is bound at residue arginine 121. Arginine 140 serves as a coordination point for substrate.

This sequence belongs to the shikimate kinase family. In terms of assembly, monomer. It depends on Mg(2+) as a cofactor.

It is found in the cytoplasm. The catalysed reaction is shikimate + ATP = 3-phosphoshikimate + ADP + H(+). It participates in metabolic intermediate biosynthesis; chorismate biosynthesis; chorismate from D-erythrose 4-phosphate and phosphoenolpyruvate: step 5/7. Catalyzes the specific phosphorylation of the 3-hydroxyl group of shikimic acid using ATP as a cosubstrate. The polypeptide is Shikimate kinase (Francisella tularensis subsp. holarctica (strain FTNF002-00 / FTA)).